Here is a 498-residue protein sequence, read N- to C-terminus: ATP synthase subunit beta, chloroplastic (498 aa).

Threonine 6 is modified (phosphothreonine). Serine 13 carries the phosphoserine modification. 172 to 179 (GGAGVGKT) provides a ligand contact to ATP.

It belongs to the ATPase alpha/beta chains family. F-type ATPases have 2 components, CF(1) - the catalytic core - and CF(0) - the membrane proton channel. CF(1) has five subunits: alpha(3), beta(3), gamma(1), delta(1), epsilon(1). CF(0) has four main subunits: a(1), b(1), b'(1) and c(9-12).

The protein resides in the plastid. Its subcellular location is the chloroplast thylakoid membrane. The enzyme catalyses ATP + H2O + 4 H(+)(in) = ADP + phosphate + 5 H(+)(out). Functionally, produces ATP from ADP in the presence of a proton gradient across the membrane. The catalytic sites are hosted primarily by the beta subunits. This Crucihimalaya wallichii (Rock-cress) protein is ATP synthase subunit beta, chloroplastic.